We begin with the raw amino-acid sequence, 154 residues long: Transcriptional repressor NrdR (154 aa).

The segment at 3 to 34 (CPYCQSEDTQVKDSRPAEDGAAIRRRRACPVC) is a zinc-finger region. The ATP-cone domain occupies 49–139 (LVVVKRTGRK…VYRNFREAKD (91 aa)).

It belongs to the NrdR family. It depends on Zn(2+) as a cofactor.

In terms of biological role, negatively regulates transcription of bacterial ribonucleotide reductase nrd genes and operons by binding to NrdR-boxes. The protein is Transcriptional repressor NrdR of Chelativorans sp. (strain BNC1).